A 325-amino-acid polypeptide reads, in one-letter code: Beta-ketoacyl-[acyl-carrier-protein] synthase III 2 (325 aa).

Catalysis depends on residues Cys113 and His250. The interval 251–255 (SANLR) is ACP-binding. The active site involves Asn280.

The protein belongs to the thiolase-like superfamily. FabH family. In terms of assembly, homodimer.

Its subcellular location is the cytoplasm. The enzyme catalyses 3-methylbutanoyl-CoA + malonyl-[ACP] + H(+) = 5-methyl-3-oxohexanoyl-[ACP] + CO2 + CoA. The catalysed reaction is 2-methylpropanoyl-CoA + malonyl-[ACP] + H(+) = 4-methyl-3-oxopentanoyl-[ACP] + CO2 + CoA. It carries out the reaction (2S)-2-methylbutanoyl-CoA + malonyl-[ACP] + H(+) = (4S)-4-methyl-3-oxohexanoyl-[ACP] + CO2 + CoA. It catalyses the reaction malonyl-[ACP] + acetyl-CoA + H(+) = 3-oxobutanoyl-[ACP] + CO2 + CoA. The enzyme catalyses malonyl-[ACP] + propanoyl-CoA + H(+) = 3-oxopentanoyl-[ACP] + CO2 + CoA. The catalysed reaction is butanoyl-CoA + malonyl-[ACP] + H(+) = 3-oxohexanoyl-[ACP] + CO2 + CoA. It carries out the reaction pentanoyl-CoA + malonyl-[ACP] + H(+) = 3-oxoheptanoyl-[ACP] + CO2 + CoA. It catalyses the reaction hexanoyl-CoA + malonyl-[ACP] + H(+) = 3-oxooctanoyl-[ACP] + CO2 + CoA. The enzyme catalyses heptanoyl-CoA + malonyl-[ACP] + H(+) = 3-oxononanoyl-[ACP] + CO2 + CoA. It participates in lipid metabolism; fatty acid biosynthesis. Functionally, catalyzes the condensation reaction of fatty acid synthesis by the addition to an acyl acceptor of two carbons from malonyl-ACP. Catalyzes the first condensation reaction which initiates fatty acid synthesis and may therefore play a role in governing the total rate of fatty acid production. Possesses both acetoacetyl-ACP synthase and acetyl transacylase activities. Has some substrate specificity for branched chain acyl-CoA, determining the biosynthesis of branched-chain of fatty acids instead of straight-chain. The polypeptide is Beta-ketoacyl-[acyl-carrier-protein] synthase III 2 (Bacillus subtilis (strain 168)).